Reading from the N-terminus, the 51-residue chain is Large ribosomal subunit protein bL33 (51 aa).

The protein belongs to the bacterial ribosomal protein bL33 family.

The chain is Large ribosomal subunit protein bL33 from Pseudoalteromonas translucida (strain TAC 125).